A 299-amino-acid polypeptide reads, in one-letter code: Phosphatidylinositol-3-phosphatase (299 aa).

The signal sequence occupies residues M1–A43.

As to quaternary structure, monomer. SapM interacts with host RAB7 via its C-terminus. Requires a metal cation as cofactor.

The protein resides in the secreted. It localises to the host cytoplasmic vesicle. It is found in the host phagosome. It catalyses the reaction a phosphate monoester + H2O = an alcohol + phosphate. It carries out the reaction a 1,2-diacyl-sn-glycero-3-phospho-(1D-myo-inositol-3-phosphate) + H2O = a 1,2-diacyl-sn-glycero-3-phospho-(1D-myo-inositol) + phosphate. Its activity is regulated as follows. Phosphatase activity is inhibited in vitro by low concentrations of several heavy metals (zinc chloride, sodium molybdate, magnesium chloride, and copper sulfate) and moderately high concentrations (&gt;8 mM) of EDTA. Its function is as follows. Virulence factor that plays an important role in blocking phagosome-lysosome fusion and thus participates in the intracellular survival of the pathogen. Acts as a phosphatase that dephosphorylates phosphatidylinositol 3-phosphate (PI3P), a membrane trafficking regulatory lipid essential for phagosomal acquisition of lysosomal constituents. Therefore, SapM eliminates PI3P from the phagosomal membrane by catalyzing its hydrolysis, and thus contributes to inhibition of phagosome maturation. Also interferes with autophagy: SapM blocks autophagosome-lysosome fusion in macrophages by binding to the small GTPase RAB7, which prevents RAB7 from being involved in this process and thus negatively regulates autophagy flux. In vitro, displays phosphatase activity with broad specificity; can dephosphorylate a variety of phosphoester substrates, with the highest activity against phosphoenolpyruvate, glycerophosphate, GTP, NADPH, phosphotyrosine and trehalose-6-phosphate. In contrast, the enzyme exhibits poor activity against glucose-6-phosphate, phosphothreonine, and a number of nucleotides (NADP, ATP, AMP, and GMP). This chain is Phosphatidylinositol-3-phosphatase, found in Mycobacterium tuberculosis (strain ATCC 25618 / H37Rv).